The chain runs to 428 residues: 3-phosphoshikimate 1-carboxyvinyltransferase (428 aa).

Lys-22, Ser-23, and Arg-27 together coordinate 3-phosphoshikimate. Lys-22 contributes to the phosphoenolpyruvate binding site. Residues Gly-98 and Arg-126 each contribute to the phosphoenolpyruvate site. Residues Ser-172, Ser-173, Gln-174, Ser-200, Asp-316, Asn-339, and Lys-343 each contribute to the 3-phosphoshikimate site. Position 174 (Gln-174) interacts with phosphoenolpyruvate. Asp-316 functions as the Proton acceptor in the catalytic mechanism. Phosphoenolpyruvate-binding residues include Arg-347, Arg-389, and Lys-414.

This sequence belongs to the EPSP synthase family. Monomer.

It is found in the cytoplasm. The enzyme catalyses 3-phosphoshikimate + phosphoenolpyruvate = 5-O-(1-carboxyvinyl)-3-phosphoshikimate + phosphate. The protein operates within metabolic intermediate biosynthesis; chorismate biosynthesis; chorismate from D-erythrose 4-phosphate and phosphoenolpyruvate: step 6/7. Its function is as follows. Catalyzes the transfer of the enolpyruvyl moiety of phosphoenolpyruvate (PEP) to the 5-hydroxyl of shikimate-3-phosphate (S3P) to produce enolpyruvyl shikimate-3-phosphate and inorganic phosphate. The chain is 3-phosphoshikimate 1-carboxyvinyltransferase from Psychromonas ingrahamii (strain DSM 17664 / CCUG 51855 / 37).